Here is a 262-residue protein sequence, read N- to C-terminus: Octanoyltransferase (262 aa).

Residues 41-232 form the BPL/LPL catalytic domain; that stretch reads PQLPDGLLLL…SFCQVFGLQA (192 aa). Substrate-binding positions include 96 to 103, 163 to 165, and 176 to 178; these read RGGEVTYH, AIG, and GFA. Cys-194 (acyl-thioester intermediate) is an active-site residue.

Belongs to the LipB family.

It localises to the cytoplasm. The enzyme catalyses octanoyl-[ACP] + L-lysyl-[protein] = N(6)-octanoyl-L-lysyl-[protein] + holo-[ACP] + H(+). It participates in protein modification; protein lipoylation via endogenous pathway; protein N(6)-(lipoyl)lysine from octanoyl-[acyl-carrier-protein]: step 1/2. Its function is as follows. Catalyzes the transfer of endogenously produced octanoic acid from octanoyl-acyl-carrier-protein onto the lipoyl domains of lipoate-dependent enzymes. Lipoyl-ACP can also act as a substrate although octanoyl-ACP is likely to be the physiological substrate. This is Octanoyltransferase from Synechococcus sp. (strain JA-2-3B'a(2-13)) (Cyanobacteria bacterium Yellowstone B-Prime).